Consider the following 261-residue polypeptide: Leucyl/phenylalanyl-tRNA--protein transferase (261 aa).

The protein belongs to the L/F-transferase family.

The protein resides in the cytoplasm. It carries out the reaction N-terminal L-lysyl-[protein] + L-leucyl-tRNA(Leu) = N-terminal L-leucyl-L-lysyl-[protein] + tRNA(Leu) + H(+). The catalysed reaction is N-terminal L-arginyl-[protein] + L-leucyl-tRNA(Leu) = N-terminal L-leucyl-L-arginyl-[protein] + tRNA(Leu) + H(+). The enzyme catalyses L-phenylalanyl-tRNA(Phe) + an N-terminal L-alpha-aminoacyl-[protein] = an N-terminal L-phenylalanyl-L-alpha-aminoacyl-[protein] + tRNA(Phe). Its function is as follows. Functions in the N-end rule pathway of protein degradation where it conjugates Leu, Phe and, less efficiently, Met from aminoacyl-tRNAs to the N-termini of proteins containing an N-terminal arginine or lysine. The protein is Leucyl/phenylalanyl-tRNA--protein transferase of Yersinia pestis bv. Antiqua (strain Antiqua).